The primary structure comprises 176 residues: Ribosome maturation factor RimM (176 aa).

Positions 101–173 constitute a PRC barrel domain; the sequence is EGEYYHYRLI…RMVVDLPEGL (73 aa).

The protein belongs to the RimM family. As to quaternary structure, binds ribosomal protein uS19.

Its subcellular location is the cytoplasm. Its function is as follows. An accessory protein needed during the final step in the assembly of 30S ribosomal subunit, possibly for assembly of the head region. Essential for efficient processing of 16S rRNA. May be needed both before and after RbfA during the maturation of 16S rRNA. It has affinity for free ribosomal 30S subunits but not for 70S ribosomes. In Syntrophobacter fumaroxidans (strain DSM 10017 / MPOB), this protein is Ribosome maturation factor RimM.